Consider the following 286-residue polypeptide: Formamidopyrimidine-DNA glycosylase (286 aa).

The active-site Schiff-base intermediate with DNA is proline 2. Glutamate 3 acts as the Proton donor in catalysis. The active-site Proton donor; for beta-elimination activity is the lysine 61. 3 residues coordinate DNA: histidine 96, arginine 115, and lysine 161. An FPG-type zinc finger spans residues 247 to 281; it reads EAYGREGEPCRRCGRAMRREAFMNRSSYFCPSCQR. The active-site Proton donor; for delta-elimination activity is arginine 271.

The protein belongs to the FPG family. Monomer. Requires Zn(2+) as cofactor.

It carries out the reaction Hydrolysis of DNA containing ring-opened 7-methylguanine residues, releasing 2,6-diamino-4-hydroxy-5-(N-methyl)formamidopyrimidine.. The catalysed reaction is 2'-deoxyribonucleotide-(2'-deoxyribose 5'-phosphate)-2'-deoxyribonucleotide-DNA = a 3'-end 2'-deoxyribonucleotide-(2,3-dehydro-2,3-deoxyribose 5'-phosphate)-DNA + a 5'-end 5'-phospho-2'-deoxyribonucleoside-DNA + H(+). Involved in base excision repair of DNA damaged by oxidation or by mutagenic agents. Acts as a DNA glycosylase that recognizes and removes damaged bases. Has a preference for oxidized purines, such as 7,8-dihydro-8-oxoguanine (8-oxoG). Has AP (apurinic/apyrimidinic) lyase activity and introduces nicks in the DNA strand. Cleaves the DNA backbone by beta-delta elimination to generate a single-strand break at the site of the removed base with both 3'- and 5'-phosphates. This Mycobacteroides abscessus (strain ATCC 19977 / DSM 44196 / CCUG 20993 / CIP 104536 / JCM 13569 / NCTC 13031 / TMC 1543 / L948) (Mycobacterium abscessus) protein is Formamidopyrimidine-DNA glycosylase.